We begin with the raw amino-acid sequence, 576 residues long: Putative export ATP-binding/permease protein RT0691 (576 aa).

In terms of domain architecture, ABC transmembrane type-1 spans 20 to 303 (LIIVMISLLS…IFELLSEIHL (284 aa)). The next 6 helical transmembrane spans lie at 21–41 (IIVM…GSVF), 61–81 (ILYI…RSYF), 135–155 (FLSF…LMFF), 158–178 (FKLA…LIKF), 242–262 (ALFF…IVWI), and 277–297 (IISF…IFEL). The 237-residue stretch at 336–572 (IEFKNVDFTY…SEIYRNICRE (237 aa)) folds into the ABC transporter domain. 371 to 378 (GRSGAGKS) provides a ligand contact to ATP.

The protein belongs to the ABC transporter superfamily. Homodimer.

It localises to the cell inner membrane. Part of an ABC transporter complex. Transmembrane domains (TMD) form a pore in the inner membrane and the ATP-binding domain (NBD) is responsible for energy generation. The protein is Putative export ATP-binding/permease protein RT0691 of Rickettsia typhi (strain ATCC VR-144 / Wilmington).